Reading from the N-terminus, the 1380-residue chain is Inverted formin-2 (1380 aa).

A GBD/FH3 domain is found at 1-330 (MSLKEGAHTK…RAVLLADDCQ (330 aa)). Disordered regions lie at residues 341–391 (LVTS…SGIP) and 440–541 (ISTS…PPPL). Basic residues predominate over residues 343–352 (TSKKHPSKEK). The segment covering 367–385 (QTDKPKDESCEEKTVKKDP) has biased composition (basic and acidic residues). The FH1 domain maps to 432-592 (VVSNAIDRIS…DYSLGYLPKA (161 aa)). 2 stretches are compositionally biased toward pro residues: residues 446-470 (LPPP…PPLP) and 478-541 (TPPP…PPPL). Residues 593–981 (YFKVNKPTLK…AEKRKKQLAD (389 aa)) enclose the FH2 domain. 2 coiled-coil regions span residues 879–930 (LKKL…KLAD) and 956–991 (LKAK…KGEN). Residues 1009-1024 (DALLADIKKGFQLRKT) enclose the WH2 domain. Disordered stretches follow at residues 1026–1049 (KTKT…DGTD), 1188–1244 (HKER…LSEA), and 1260–1380 (FQSS…CVVQ). Polar residues-rich tracts occupy residues 1206–1244 (GTES…LSEA), 1260–1284 (FQSS…QAQR), and 1294–1303 (TRDTTVTEGS). Positions 1306–1322 (EEDKCNDEGYPEHKTMG) are enriched in basic and acidic residues. The segment covering 1328-1339 (SSSHSTTLQQSS) has biased composition (low complexity). The span at 1345-1359 (VKRGSSKHKKKRRSS) shows a compositional bias: basic residues.

This sequence belongs to the formin homology family.

This Xenopus tropicalis (Western clawed frog) protein is Inverted formin-2 (inf2).